Reading from the N-terminus, the 276-residue chain is Small ribosomal subunit protein uS2 (276 aa).

2 disordered regions span residues 209–233 (AQEA…AADV) and 252–276 (VDWS…SSWE). Over residues 211–231 (EAAAAAQAAKETAEPTTEGAA) the composition is skewed to low complexity.

It belongs to the universal ribosomal protein uS2 family. As to quaternary structure, component of the small ribosomal subunit. Mature ribosomes consist of a small (40S) and a large (60S) subunit. The 40S subunit contains about 33 different proteins and 1 molecule of RNA (18S). The 60S subunit contains about 49 different proteins and 3 molecules of RNA (25S, 5.8S and 5S). Interacts with RPS21.

The protein localises to the cytoplasm. Required for the assembly and/or stability of the 40S ribosomal subunit. Required for the processing of the 20S rRNA-precursor to mature 18S rRNA in a late step of the maturation of 40S ribosomal subunits. The sequence is that of Small ribosomal subunit protein uS2 from Mycosarcoma maydis (Corn smut fungus).